An 866-amino-acid polypeptide reads, in one-letter code: Leucine--tRNA ligase (866 aa).

The 'HIGH' region signature appears at 42-52 (PYPSGKLHMGH). The short motif at 630–634 (KMSKS) is the 'KMSKS' region element. ATP is bound at residue lysine 633.

The protein belongs to the class-I aminoacyl-tRNA synthetase family.

It is found in the cytoplasm. The catalysed reaction is tRNA(Leu) + L-leucine + ATP = L-leucyl-tRNA(Leu) + AMP + diphosphate. This Laribacter hongkongensis (strain HLHK9) protein is Leucine--tRNA ligase.